A 338-amino-acid polypeptide reads, in one-letter code: Fructose-1,6-bisphosphatase class 1 (338 aa).

Mg(2+) contacts are provided by glutamate 94, aspartate 116, leucine 118, and aspartate 119. Residues 119-122 (DGSS), asparagine 210, and lysine 276 contribute to the substrate site. Glutamate 282 provides a ligand contact to Mg(2+).

The protein belongs to the FBPase class 1 family. As to quaternary structure, homotetramer. Mg(2+) serves as cofactor.

It is found in the cytoplasm. It carries out the reaction beta-D-fructose 1,6-bisphosphate + H2O = beta-D-fructose 6-phosphate + phosphate. It participates in carbohydrate biosynthesis; gluconeogenesis. In Burkholderia mallei (strain NCTC 10247), this protein is Fructose-1,6-bisphosphatase class 1.